The following is a 180-amino-acid chain: ADP-ribosylation factor 5 (180 aa).

G2 carries N-myristoyl glycine lipidation. Residues 24 to 31 (GLDAAGKT), 67 to 71 (DVGGQ), and 126 to 129 (NKQD) each bind GTP.

It belongs to the small GTPase superfamily. Arf family. As to quaternary structure, interacts (when activated) with GGA1, GGA2 and GGA3; the interaction is required for proper subcellular location of GGA1, GGA2 and GGA3. Binds ASAP2. Interacts with NCS1/FREQ at the Golgi complex. Interacts with RAB11FIP3 and RAB11FIP4.

It localises to the golgi apparatus. The protein localises to the cytoplasm. It is found in the perinuclear region. Its subcellular location is the membrane. The protein resides in the trans-Golgi network membrane. Its function is as follows. GTP-binding protein involved in protein trafficking; may modulate vesicle budding and uncoating within the Golgi apparatus. Functionally, (Microbial infection) Functions as an allosteric activator of the cholera toxin catalytic subunit, an ADP-ribosyltransferase. The polypeptide is ADP-ribosylation factor 5 (ARF5) (Homo sapiens (Human)).